The following is a 565-amino-acid chain: Adenine deaminase (565 aa).

It belongs to the metallo-dependent hydrolases superfamily. Adenine deaminase family. Mn(2+) serves as cofactor.

The enzyme catalyses adenine + H2O + H(+) = hypoxanthine + NH4(+). This chain is Adenine deaminase, found in Gluconobacter oxydans (strain 621H) (Gluconobacter suboxydans).